Here is a 203-residue protein sequence, read N- to C-terminus: 3-isopropylmalate dehydratase small subunit (203 aa).

The protein belongs to the LeuD family. LeuD type 1 subfamily. As to quaternary structure, heterodimer of LeuC and LeuD.

It carries out the reaction (2R,3S)-3-isopropylmalate = (2S)-2-isopropylmalate. It participates in amino-acid biosynthesis; L-leucine biosynthesis; L-leucine from 3-methyl-2-oxobutanoate: step 2/4. Catalyzes the isomerization between 2-isopropylmalate and 3-isopropylmalate, via the formation of 2-isopropylmaleate. The sequence is that of 3-isopropylmalate dehydratase small subunit from Phenylobacterium zucineum (strain HLK1).